The chain runs to 1138 residues: 2'-5'-oligoadenylate synthase 3 (1138 aa).

N-acetylmethionine is present on Met-1. Positions 6–341 (TPAGALDKLV…GVLVQPWEGP (336 aa)) are OAS domain 1. Interaction with dsRNA stretches follow at residues 12 to 56 (DKLV…VIRI) and 185 to 199 (EPRK…AKLK). The segment at 342–462 (GLPRAGILDL…GSRMSPDLSQ (121 aa)) is linker. A compositionally biased stretch (basic and acidic residues) spans 370–379 (LAVQSKERSQ). Disordered regions lie at residues 370 to 403 (LAVQ…NPSA) and 434 to 459 (TQST…MSPD). The segment covering 447–459 (SSISTAGSRMSPD) has biased composition (polar residues). OAS domain stretches follow at residues 463–793 (IPSK…PWDV) and 801–1135 (TLAE…WPVK). Residue Ser-855 participates in ATP binding. Asp-867, Asp-869, and Asp-939 together coordinate Mg(2+). Residues Arg-998, Lys-1001, and Gln-1020 each contribute to the ATP site.

The protein belongs to the 2-5A synthase family. As to quaternary structure, monomer. Mg(2+) serves as cofactor. In terms of tissue distribution, intestine.

It localises to the cytoplasm. It is found in the nucleus. It carries out the reaction 3 ATP = 5'-triphosphoadenylyl-(2'-&gt;5')-adenylyl-(2'-&gt;5')-adenosine + 2 diphosphate. Produced as a latent enzyme which is activated by dsRNA generated during the course of viral infection. Strongly activated by long dsRNAs at least 50 nucleotides in length. ssRNA does not activate the enzyme. In terms of biological role, interferon-induced, dsRNA-activated antiviral enzyme which plays a critical role in cellular innate antiviral response. In addition, it may also play a role in other cellular processes such as apoptosis, cell growth, differentiation and gene regulation. Synthesizes preferentially dimers of 2'-5'-oligoadenylates (2-5A) from ATP which then bind to the inactive monomeric form of ribonuclease L (RNase L) leading to its dimerization and subsequent activation. Activation of RNase L leads to degradation of cellular as well as viral RNA, resulting in the inhibition of protein synthesis, thus terminating viral replication. Can mediate the antiviral effect via the classical RNase L-dependent pathway or an alternative antiviral pathway independent of RNase L. This is 2'-5'-oligoadenylate synthase 3 (Oas3) from Mus musculus (Mouse).